The primary structure comprises 395 residues: Dihydroorotate dehydrogenase (quinone), mitochondrial (395 aa).

A mitochondrion; not cleaved-targeting transit peptide spans 1–10; sequence MAWRHLKKRA. At 1–10 the chain is on the mitochondrial matrix side; it reads MAWRHLKKRA. Residues 11-30 form a helical membrane-spanning segment; the sequence is QDAVIILGGGGLLFASYLMA. At 31–395 the chain is on the mitochondrial intermembrane side; that stretch reads TGDERFYAEH…TDAIGADHRR (365 aa). FMN-binding positions include 95 to 99 and serine 119; that span reads AGFDK. Residue lysine 99 coordinates substrate. 144–148 contacts substrate; the sequence is NRYGF. FMN-binding residues include asparagine 180 and asparagine 211. 211–216 serves as a coordination point for substrate; it reads NVSSPN. Serine 214 (nucleophile) is an active-site residue. 2 residues coordinate FMN: lysine 254 and threonine 282. 283-284 contacts substrate; sequence NT. Residues glycine 305, glycine 334, and 355–356 each bind FMN; that span reads YT.

The protein belongs to the dihydroorotate dehydrogenase family. Type 2 subfamily. In terms of assembly, monomer. FMN serves as cofactor. In terms of processing, the uncleaved transit peptide is required for mitochondrial targeting and proper membrane integration.

It is found in the mitochondrion inner membrane. It catalyses the reaction (S)-dihydroorotate + a quinone = orotate + a quinol. It participates in pyrimidine metabolism; UMP biosynthesis via de novo pathway; orotate from (S)-dihydroorotate (quinone route): step 1/1. In terms of biological role, catalyzes the conversion of dihydroorotate to orotate with quinone as electron acceptor. Required for UMP biosynthesis via de novo pathway. This Homo sapiens (Human) protein is Dihydroorotate dehydrogenase (quinone), mitochondrial (DHODH).